The primary structure comprises 339 residues: Dihydroorotate dehydrogenase (quinone) (339 aa).

FMN contacts are provided by residues alanine 62–lysine 66 and threonine 86. Lysine 66 lines the substrate pocket. Asparagine 111–phenylalanine 115 lines the substrate pocket. FMN contacts are provided by asparagine 139 and asparagine 172. Asparagine 172 lines the substrate pocket. The Nucleophile role is filled by serine 175. Asparagine 177 is a substrate binding site. FMN contacts are provided by lysine 217 and threonine 245. Residue asparagine 246–threonine 247 coordinates substrate. Residues glycine 268, glycine 297, and tyrosine 318–serine 319 each bind FMN.

This sequence belongs to the dihydroorotate dehydrogenase family. Type 2 subfamily. As to quaternary structure, monomer. The cofactor is FMN.

The protein localises to the cell membrane. The enzyme catalyses (S)-dihydroorotate + a quinone = orotate + a quinol. The protein operates within pyrimidine metabolism; UMP biosynthesis via de novo pathway; orotate from (S)-dihydroorotate (quinone route): step 1/1. Its function is as follows. Catalyzes the conversion of dihydroorotate to orotate with quinone as electron acceptor. The protein is Dihydroorotate dehydrogenase (quinone) of Shewanella baltica (strain OS185).